The primary structure comprises 151 residues: Ribosome maturation factor RimP (151 aa).

It belongs to the RimP family.

It localises to the cytoplasm. Functionally, required for maturation of 30S ribosomal subunits. The protein is Ribosome maturation factor RimP of Aliivibrio fischeri (strain MJ11) (Vibrio fischeri).